The sequence spans 446 residues: Peroxisomal biogenesis factor 3 (446 aa).

Residues M1–K12 lie on the Peroxisomal side of the membrane. The chain crosses the membrane as a helical span at residues L13–A33. The Cytoplasmic portion of the chain corresponds to A34 to V446. The interval R101 to S122 is disordered.

The protein belongs to the peroxin-3 family.

Its subcellular location is the peroxisome membrane. Its function is as follows. Involved in peroxisome biosynthesis. This is Peroxisomal biogenesis factor 3 (PEX3) from Eremothecium gossypii (strain ATCC 10895 / CBS 109.51 / FGSC 9923 / NRRL Y-1056) (Yeast).